Here is a 93-residue protein sequence, read N- to C-terminus: Beta-defensin 128 (93 aa).

The first 18 residues, 1–18 (MKLFLVLIILLFEVLTDG), serve as a signal peptide directing secretion. 3 cysteine pairs are disulfide-bonded: C24-C52, C32-C46, and C36-C53.

It belongs to the beta-defensin family.

The protein resides in the secreted. Has antibacterial activity. The polypeptide is Beta-defensin 128 (DEFB128) (Homo sapiens (Human)).